The following is a 413-amino-acid chain: 1-acylglycerol-3-phosphate O-acyltransferase Pnpla3 (413 aa).

Residues 1–42 (MYDPERRWSLSFAGCGFLGFYHVGATLCLSERAPHLLRDART) lie on the Cytoplasmic side of the membrane. The region spanning 10 to 179 (LSFAGCGFLG…SDNVPVLDAK (170 aa)) is the PNPLA domain. The GXGXXG motif lies at 14–19 (GCGFLG). A helical; Signal-anchor for type II membrane protein membrane pass occupies residues 43–63 (FFGCSAGALHAVTFVCSLPLG). The GXSXG signature appears at 45–49 (GCSAG). The active-site Nucleophile is the Ser-47. Residues 64 to 413 (RIMEILMDLV…HKPQGNSAGL (350 aa)) are Lumenal-facing. Catalysis depends on Asp-166, which acts as the Proton acceptor. Positions 166-168 (DGG) match the DGA/G motif. Residues Asn-206 and Asn-209 are each glycosylated (N-linked (GlcNAc...) asparagine). Residues 389–413 (KDDHRMLKHGHHPSPHKPQGNSAGL) form a disordered region. The span at 394–403 (MLKHGHHPSP) shows a compositional bias: basic residues.

Restricted to adipose tissue. Expressed in inguinal and epididymal white adipose tissues and in interscapular brown adipose tissue. Also expressed in liver in response to high-sucrose diet.

It is found in the membrane. The protein resides in the lipid droplet. It catalyses the reaction a 1-acyl-sn-glycero-3-phosphate + an acyl-CoA = a 1,2-diacyl-sn-glycero-3-phosphate + CoA. It carries out the reaction a triacylglycerol + H2O = a diacylglycerol + a fatty acid + H(+). The catalysed reaction is a 1-acylglycerol + a 1,3-diacylglycerol = a triacylglycerol + glycerol. The enzyme catalyses a 1-acylglycerol + a 1,2-diacylglycerol = a triacylglycerol + glycerol. It catalyses the reaction 2 a 1-acylglycerol = a 1,2-diacylglycerol + glycerol. It carries out the reaction 1-(9Z-octadecenoyl)-sn-glycero-3-phosphate + (9Z)-octadecenoyl-CoA = 1,2-di-(9Z-octadecenoyl)-sn-glycero-3-phosphate + CoA. The catalysed reaction is 1-(9Z-octadecenoyl)-sn-glycero-3-phosphate + hexadecanoyl-CoA = 1-(9Z)-octadecenoyl-2-hexadecanoyl-sn-glycero-3-phosphate + CoA. The enzyme catalyses 1-(9Z-octadecenoyl)-sn-glycero-3-phosphate + (9Z,12Z)-octadecadienoyl-CoA = 1-(9Z)-octadecenoyl-2-(9Z,12Z)-octadecadienoyl-sn-glycero-3-phosphate + CoA. It catalyses the reaction 1-(9Z-octadecenoyl)-sn-glycero-3-phosphate + (5Z,8Z,11Z,14Z)-eicosatetraenoyl-CoA = 1-(9Z)-octadecenoyl-2-(5Z,8Z,11Z,14Z)-eicosatetraenoyl-sn-glycero-3-phosphate + CoA. It carries out the reaction 2 1-(9Z-octadecenoyl)-glycerol = 1,2-di-(9Z-octadecenoyl)-glycerol + glycerol. The catalysed reaction is 1-(9Z-octadecenoyl)-glycerol + 1,2-di-(9Z-octadecenoyl)-glycerol = 1,2,3-tri-(9Z-octadecenoyl)-glycerol + glycerol. The enzyme catalyses 1-(9Z-octadecenoyl)-glycerol + 1,3-di-(9Z-octadecenoyl)-glycerol = 1,2,3-tri-(9Z-octadecenoyl)-glycerol + glycerol. It catalyses the reaction 1,2,3-tri-(9Z-octadecenoyl)-glycerol + H2O = 1,3-di-(9Z-octadecenoyl)-glycerol + (9Z)-octadecenoate + H(+). It carries out the reaction a 1,2-diacyl-sn-glycero-3-phosphocholine + H2O = a 1-acyl-sn-glycero-3-phosphocholine + a fatty acid + H(+). It participates in phospholipid metabolism. It functions in the pathway glycerolipid metabolism. Specifically catalyzes coenzyme A (CoA)-dependent acylation of 1-acyl-sn-glycerol 3-phosphate (2-lysophosphatidic acid/LPA) to generate phosphatidic acid (PA), an important metabolic intermediate and precursor for both triglycerides and glycerophospholipids. Does not esterify other lysophospholipids. Acyl donors are long chain (at least C16) fatty acyl-CoAs: arachidonoyl-CoA, linoleoyl-CoA, oleoyl-CoA and at a lesser extent palmitoyl-CoA. Additionally possesses low triacylglycerol lipase and CoA-independent acylglycerol transacylase activities and thus may play a role in acyl-chain remodeling of triglycerides. In vitro may express hydrolytic activity against glycerolipids triacylglycerol, diacylglycerol and monoacylglycerol, with a strong preference for oleic acid as the acyl moiety. However, the triacylglycerol hydrolase activity is controversial and may be very low. Possesses phospholipase A2 activity. This chain is 1-acylglycerol-3-phosphate O-acyltransferase Pnpla3, found in Mus musculus (Mouse).